Consider the following 167-residue polypeptide: Ribosome maturation factor RimM (167 aa).

The PRC barrel domain occupies 93 to 165; that stretch reads KGVYYDFQLI…QVIIDPIPGL (73 aa).

It belongs to the RimM family. In terms of assembly, binds ribosomal protein uS19.

The protein resides in the cytoplasm. In terms of biological role, an accessory protein needed during the final step in the assembly of 30S ribosomal subunit, possibly for assembly of the head region. Essential for efficient processing of 16S rRNA. May be needed both before and after RbfA during the maturation of 16S rRNA. It has affinity for free ribosomal 30S subunits but not for 70S ribosomes. The polypeptide is Ribosome maturation factor RimM (Dehalococcoides mccartyi (strain ATCC BAA-2266 / KCTC 15142 / 195) (Dehalococcoides ethenogenes (strain 195))).